The following is a 339-amino-acid chain: Replication factor C subunit 4 (339 aa).

ATP is bound at residue 49–56 (GPPGTGKT).

The protein belongs to the activator 1 small subunits family. Heterotetramer of subunits RFC2, RFC3, RFC4 and RFC5 that can form a complex with RFC1.

Its subcellular location is the nucleus. Its function is as follows. May be involved in DNA replication and thus regulate cell proliferation. The polypeptide is Replication factor C subunit 4 (RFC4) (Arabidopsis thaliana (Mouse-ear cress)).